We begin with the raw amino-acid sequence, 192 residues long: Phosphoheptose isomerase (192 aa).

In terms of domain architecture, SIS spans 35-192 (LIETLENQGK…CIERHFANKN (158 aa)). A substrate-binding site is contributed by 50 to 52 (NGG). Residues His59 and Glu63 each contribute to the Zn(2+) site. Substrate is bound by residues Glu63, 92-93 (ND), 118-120 (STS), Ser123, and Gln170. Zn(2+) is bound by residues Gln170 and His178.

The protein belongs to the SIS family. GmhA subfamily. In terms of assembly, homotetramer. It depends on Zn(2+) as a cofactor.

It localises to the cytoplasm. The catalysed reaction is 2 D-sedoheptulose 7-phosphate = D-glycero-alpha-D-manno-heptose 7-phosphate + D-glycero-beta-D-manno-heptose 7-phosphate. Its pathway is carbohydrate biosynthesis; D-glycero-D-manno-heptose 7-phosphate biosynthesis; D-glycero-alpha-D-manno-heptose 7-phosphate and D-glycero-beta-D-manno-heptose 7-phosphate from sedoheptulose 7-phosphate: step 1/1. Functionally, catalyzes the isomerization of sedoheptulose 7-phosphate in D-glycero-D-manno-heptose 7-phosphate. This chain is Phosphoheptose isomerase, found in Helicobacter pylori (strain Shi470).